The following is a 293-amino-acid chain: Ribosomal protein L11 methyltransferase (293 aa).

Residues Thr-145, Gly-166, Asp-188, and Asn-230 each contribute to the S-adenosyl-L-methionine site.

Belongs to the methyltransferase superfamily. PrmA family.

Its subcellular location is the cytoplasm. The catalysed reaction is L-lysyl-[protein] + 3 S-adenosyl-L-methionine = N(6),N(6),N(6)-trimethyl-L-lysyl-[protein] + 3 S-adenosyl-L-homocysteine + 3 H(+). Its function is as follows. Methylates ribosomal protein L11. In Klebsiella pneumoniae (strain 342), this protein is Ribosomal protein L11 methyltransferase.